A 995-amino-acid polypeptide reads, in one-letter code: Bifunctional glutamine synthetase adenylyltransferase/adenylyl-removing enzyme (995 aa).

The interval 1–474 (MNHSAPGNAD…HYEKLFEGDD (474 aa)) is adenylyl removase. GlnE stretches follow at residues 122 to 333 (RRMK…MKRQ) and 637 to 853 (SYEE…MRRA). The adenylyl transferase stretch occupies residues 479–995 (AKLPALDYSA…LEGTSPASAR (517 aa)).

It belongs to the GlnE family. It depends on Mg(2+) as a cofactor.

The catalysed reaction is [glutamine synthetase]-O(4)-(5'-adenylyl)-L-tyrosine + phosphate = [glutamine synthetase]-L-tyrosine + ADP. It carries out the reaction [glutamine synthetase]-L-tyrosine + ATP = [glutamine synthetase]-O(4)-(5'-adenylyl)-L-tyrosine + diphosphate. Functionally, involved in the regulation of glutamine synthetase GlnA, a key enzyme in the process to assimilate ammonia. When cellular nitrogen levels are high, the C-terminal adenylyl transferase (AT) inactivates GlnA by covalent transfer of an adenylyl group from ATP to specific tyrosine residue of GlnA, thus reducing its activity. Conversely, when nitrogen levels are low, the N-terminal adenylyl removase (AR) activates GlnA by removing the adenylyl group by phosphorolysis, increasing its activity. The regulatory region of GlnE binds the signal transduction protein PII (GlnB) which indicates the nitrogen status of the cell. This is Bifunctional glutamine synthetase adenylyltransferase/adenylyl-removing enzyme from Bradyrhizobium diazoefficiens (strain JCM 10833 / BCRC 13528 / IAM 13628 / NBRC 14792 / USDA 110).